The sequence spans 496 residues: Membrane-bound lytic murein transglycosylase F (496 aa).

An N-terminal signal peptide occupies residues 1 to 29 (MFFRPDFRPRCAKWLIATGLFLMLGACVE). The interval 30-267 (KPTTLERVKE…RLKDRYYGHV (238 aa)) is non-LT domain. Residues 268–496 (DVLGYVGAYT…SGSSPDKPAL (229 aa)) are LT domain. The active site involves E314. The tract at residues 464–496 (VADGNLHVPGVDKTQPPAPPAPASGSSPDKPAL) is disordered. The segment covering 486–496 (ASGSSPDKPAL) has biased composition (low complexity).

It in the N-terminal section; belongs to the bacterial solute-binding protein 3 family. The protein in the C-terminal section; belongs to the transglycosylase Slt family.

The protein resides in the cell outer membrane. The catalysed reaction is Exolytic cleavage of the (1-&gt;4)-beta-glycosidic linkage between N-acetylmuramic acid (MurNAc) and N-acetylglucosamine (GlcNAc) residues in peptidoglycan, from either the reducing or the non-reducing ends of the peptidoglycan chains, with concomitant formation of a 1,6-anhydrobond in the MurNAc residue.. Murein-degrading enzyme that degrades murein glycan strands and insoluble, high-molecular weight murein sacculi, with the concomitant formation of a 1,6-anhydromuramoyl product. Lytic transglycosylases (LTs) play an integral role in the metabolism of the peptidoglycan (PG) sacculus. Their lytic action creates space within the PG sacculus to allow for its expansion as well as for the insertion of various structures such as secretion systems and flagella. In Pseudomonas savastanoi pv. phaseolicola (strain 1448A / Race 6) (Pseudomonas syringae pv. phaseolicola (strain 1448A / Race 6)), this protein is Membrane-bound lytic murein transglycosylase F.